The primary structure comprises 211 residues: tRNA (guanine-N(7)-)-methyltransferase (211 aa).

Positions 44, 69, 96, and 118 each coordinate S-adenosyl-L-methionine. Aspartate 118 is an active-site residue. Lysine 122 contacts substrate. An interaction with RNA region spans residues 124-129 (KHEKRR). Residues aspartate 154 and 191–194 (TEYE) each bind substrate.

This sequence belongs to the class I-like SAM-binding methyltransferase superfamily. TrmB family.

The catalysed reaction is guanosine(46) in tRNA + S-adenosyl-L-methionine = N(7)-methylguanosine(46) in tRNA + S-adenosyl-L-homocysteine. Its pathway is tRNA modification; N(7)-methylguanine-tRNA biosynthesis. Functionally, catalyzes the formation of N(7)-methylguanine at position 46 (m7G46) in tRNA. This is tRNA (guanine-N(7)-)-methyltransferase from Streptococcus pyogenes serotype M6 (strain ATCC BAA-946 / MGAS10394).